Here is a 60-residue protein sequence, read N- to C-terminus: MEKHNNPGSFTINNNIHDALNSIDTIVKNNNNNNNNNNNNNNNNNNNNNKFFICGCKNQK.

The segment at 27-50 is disordered; that stretch reads VKNNNNNNNNNNNNNNNNNNNNNK. A compositionally biased stretch (low complexity) spans 29–49; the sequence is NNNNNNNNNNNNNNNNNNNNN.

This is an uncharacterized protein from Dictyostelium discoideum (Social amoeba).